Here is a 382-residue protein sequence, read N- to C-terminus: ATP phosphoribosyltransferase regulatory subunit (382 aa).

It belongs to the class-II aminoacyl-tRNA synthetase family. HisZ subfamily. Heteromultimer composed of HisG and HisZ subunits.

The protein resides in the cytoplasm. Its pathway is amino-acid biosynthesis; L-histidine biosynthesis; L-histidine from 5-phospho-alpha-D-ribose 1-diphosphate: step 1/9. Functionally, required for the first step of histidine biosynthesis. May allow the feedback regulation of ATP phosphoribosyltransferase activity by histidine. This Acidovorax ebreus (strain TPSY) (Diaphorobacter sp. (strain TPSY)) protein is ATP phosphoribosyltransferase regulatory subunit.